The chain runs to 153 residues: Small ribosomal subunit protein uS5 (153 aa).

Residues 15–78 (FQEVVVNIGR…DDAFKNLIHV (64 aa)) enclose the S5 DRBM domain.

The protein belongs to the universal ribosomal protein uS5 family. In terms of assembly, part of the 30S ribosomal subunit. Contacts proteins S4 and S8.

With S4 and S12 plays an important role in translational accuracy. Functionally, located at the back of the 30S subunit body where it stabilizes the conformation of the head with respect to the body. In Helicobacter pylori (strain P12), this protein is Small ribosomal subunit protein uS5.